The sequence spans 181 residues: Large ribosomal subunit protein uL6 (181 aa).

The protein belongs to the universal ribosomal protein uL6 family. In terms of assembly, part of the 50S ribosomal subunit.

Functionally, this protein binds to the 23S rRNA, and is important in its secondary structure. It is located near the subunit interface in the base of the L7/L12 stalk, and near the tRNA binding site of the peptidyltransferase center. The polypeptide is Large ribosomal subunit protein uL6 (Coprothermobacter proteolyticus (strain ATCC 35245 / DSM 5265 / OCM 4 / BT)).